The primary structure comprises 89 residues: uncharacterized protein (89 aa).

2 stretches are compositionally biased toward basic residues: residues 1-17 (MPPH…HGHH) and 65-89 (HHGH…HGHH). Disordered regions lie at residues 1 to 25 (MPPH…ITPV) and 60 to 89 (LETG…HGHH).

This is an uncharacterized protein from Dictyostelium discoideum (Social amoeba).